We begin with the raw amino-acid sequence, 408 residues long: UDP-glucose 4-epimerase 2 (408 aa).

13-44 serves as a coordination point for NAD(+); the sequence is TVLVTGGAGYIGSHAVLQLLLAGFRAVVVDNL. Serine 138 serves as a coordination point for substrate. Residue tyrosine 162 is the Proton acceptor of the active site. A disordered region spans residues 369–408; that stretch reads GSPKQNGHCTNGFSESTRHNGHNGYGLVDSAKHNGNGHFH. A compositionally biased stretch (polar residues) spans 370-383; the sequence is SPKQNGHCTNGFSE.

It belongs to the NAD(P)-dependent epimerase/dehydratase family. NAD(+) serves as cofactor.

The catalysed reaction is UDP-alpha-D-glucose = UDP-alpha-D-galactose. Its pathway is carbohydrate metabolism; galactose metabolism. Catalyzes the interconversion between UDP-glucose and UDP-galactose. This is UDP-glucose 4-epimerase 2 (UGE-2) from Oryza sativa subsp. japonica (Rice).